Reading from the N-terminus, the 244-residue chain is Probable transcriptional regulatory protein DMR_30850 (244 aa).

It belongs to the TACO1 family.

Its subcellular location is the cytoplasm. The chain is Probable transcriptional regulatory protein DMR_30850 from Solidesulfovibrio magneticus (strain ATCC 700980 / DSM 13731 / RS-1) (Desulfovibrio magneticus).